Reading from the N-terminus, the 573-residue chain is Probable cytochrome c oxidase subunit 1 (573 aa).

A helical membrane pass occupies residues 40 to 60 (IGIMYCVACISFFFIGGLLAL). His86 lines the Fe(II)-heme a pocket. Transmembrane regions (helical) follow at residues 89–109 (IMLL…VLPL), 121–141 (LNAF…AGFI), 170–190 (LWIM…VNMI), 213–233 (IMVT…ALFG), 258–278 (LFWF…FGIV), and 290–310 (IFGY…SVAV). Cu cation-binding residues include His264 and Tyr268. Positions 264-268 (HPEVY) form a cross-link, 1'-histidyl-3'-tyrosine (His-Tyr). Residues His313 and His314 each contribute to the Cu cation site. Transmembrane regions (helical) follow at residues 315–335 (MFAT…LIAV) and 359–379 (MLFS…GVLL). His397 provides a ligand contact to heme a3. 3 helical membrane-spanning segments follow: residues 398 to 418 (FHYV…YFWF), 433 to 453 (LHFW…HWLG), and 476 to 496 (VSTI…WNVF). Residue His399 coordinates Fe(II)-heme a.

Belongs to the heme-copper respiratory oxidase family.

The protein localises to the cell membrane. It carries out the reaction 4 Fe(II)-[cytochrome c] + O2 + 8 H(+)(in) = 4 Fe(III)-[cytochrome c] + 2 H2O + 4 H(+)(out). It functions in the pathway energy metabolism; oxidative phosphorylation. Functionally, cytochrome c oxidase is the component of the respiratory chain that catalyzes the reduction of oxygen to water. Subunits 1-3 form the functional core of the enzyme complex. CO I is the catalytic subunit of the enzyme. Electrons originating in cytochrome c are transferred via the copper A center of subunit 2 and heme A of subunit 1 to the bimetallic center formed by heme A3 and copper B. This Mycobacterium bovis (strain ATCC BAA-935 / AF2122/97) protein is Probable cytochrome c oxidase subunit 1 (ctaD).